A 212-amino-acid polypeptide reads, in one-letter code: Ribosomal RNA large subunit methyltransferase E (212 aa).

S-adenosyl-L-methionine is bound by residues Gly57, Trp59, Asp77, Asp93, and Asp122. Residue Lys162 is the Proton acceptor of the active site.

This sequence belongs to the class I-like SAM-binding methyltransferase superfamily. RNA methyltransferase RlmE family.

The protein resides in the cytoplasm. It catalyses the reaction uridine(2552) in 23S rRNA + S-adenosyl-L-methionine = 2'-O-methyluridine(2552) in 23S rRNA + S-adenosyl-L-homocysteine + H(+). In terms of biological role, specifically methylates the uridine in position 2552 of 23S rRNA at the 2'-O position of the ribose in the fully assembled 50S ribosomal subunit. This is Ribosomal RNA large subunit methyltransferase E from Coxiella burnetii (strain CbuK_Q154) (Coxiella burnetii (strain Q154)).